The chain runs to 150 residues: Large ribosomal subunit protein uL15 (150 aa).

A compositionally biased stretch (polar residues) spans 1-15 (MNLSNLQPAEGSTHN). Residues 1-52 (MNLSNLQPAEGSTHNQNKRLGRGEGSGKGGTSARGHKGAKSRSGYSKKIGFE) are disordered. Residues 23–32 (GEGSGKGGTS) are compositionally biased toward gly residues.

The protein belongs to the universal ribosomal protein uL15 family. In terms of assembly, part of the 50S ribosomal subunit.

Binds to the 23S rRNA. This chain is Large ribosomal subunit protein uL15, found in Flavobacterium psychrophilum (strain ATCC 49511 / DSM 21280 / CIP 103535 / JIP02/86).